The chain runs to 55 residues: Large ribosomal subunit protein bL33 (55 aa).

The protein belongs to the bacterial ribosomal protein bL33 family.

This is Large ribosomal subunit protein bL33 from Baumannia cicadellinicola subsp. Homalodisca coagulata.